A 118-amino-acid polypeptide reads, in one-letter code: Large ribosomal subunit protein uL24 (118 aa).

It belongs to the universal ribosomal protein uL24 family. As to quaternary structure, part of the 50S ribosomal subunit.

One of two assembly initiator proteins, it binds directly to the 5'-end of the 23S rRNA, where it nucleates assembly of the 50S subunit. In terms of biological role, one of the proteins that surrounds the polypeptide exit tunnel on the outside of the subunit. The sequence is that of Large ribosomal subunit protein uL24 from Synechococcus sp. (strain WH7803).